A 1312-amino-acid polypeptide reads, in one-letter code: DNA repair protein RAD50 (1312 aa).

Residues Arg-13, Asn-36, Gly-37, Gly-39, Lys-40, Thr-41, Thr-42, Ile-65, Asp-67, and Gln-158 each coordinate ATP. Thr-41 is a binding site for Mg(2+). Gln-158 lines the Mg(2+) pocket. Coiled-coil stretches lie at residues 185–347 (TKAL…LIRR) and 403–558 (QDLT…LQND). A Phosphoserine modification is found at Ser-469. Thr-568 is modified (phosphothreonine). The stretch at 640-678 (DCTIDEYNDVLEETELSYKTALENLKMHQTTLEFNRKAL) forms a coiled coil. The Zinc-hook domain maps to 640 to 741 (DCTIDEYNDV…SLRLLEKHII (102 aa)). Cys-687 and Cys-690 together coordinate Zn(2+). Coiled coils occupy residues 712 to 741 (DANF…KHII) and 787 to 1108 (LAES…DIEK).

Belongs to the SMC family. RAD50 subfamily. Component of the MRN complex composed of two heterodimers RAD50 and MRE11 associated with a single XRS2. The MRN complexes dimerize on DNA to form joined MRN-MRN oligomers required for DNA double-strand break repair. Requires Zn(2+) as cofactor.

The protein localises to the nucleus. It is found in the chromosome. It catalyses the reaction ATP + H2O = ADP + phosphate + H(+). Functionally, component of the MRN complex, which plays a central role in double-strand break (DSB) repair, DNA recombination, maintenance of telomere integrity and meiosis. The MRN complex is involved in the repair of DNA double-strand breaks (DSBs) via homologous recombination (HR), an error-free mechanism which primarily occurs during S and G2 phases. The complex (1) mediates the end resection of damaged DNA, which generates proper single-stranded DNA, a key initial steps in HR, and is (2) required for the recruitment of other repair factors and efficient activation of TEL1/ATM and ATR upon DNA damage. The MRN complex possesses single-strand endonuclease activity and double-strand-specific 3'-5' exonuclease activity, which are provided by MRE11, to initiate end resection, which is required for single-strand invasion and recombination. Within the complex, RAD50 is both required to bind DNA ends and hold them in close proximity and regulate the activity of MRE11. RAD50 provides an ATP-dependent control of MRE11 by positioning DNA ends into the MRE11 active site: ATP-binding induces a large structural change from an open form with accessible MRE11 nuclease sites into a closed form. The MRN complex is also required for the processing of R-loops. In Saccharomyces cerevisiae (strain ATCC 204508 / S288c) (Baker's yeast), this protein is DNA repair protein RAD50.